The primary structure comprises 682 residues: Potassium-transporting ATPase ATP-binding subunit (682 aa).

Helical transmembrane passes span 34-54 (PVMFIVWIGSLLTTCISIAMA), 62-82 (ALFSAAISGWLWVTVLFANFA), 219-239 (IALTILLIALTIVFLLATATL), and 254-274 (VLVALLVCLIPTTIGGLLSAI). Aspartate 307 (4-aspartylphosphate intermediate) is an active-site residue. ATP is bound by residues aspartate 344, glutamate 348, 377 to 384 (FTAQSRMS), and lysine 395. Positions 518 and 522 each coordinate Mg(2+). Transmembrane regions (helical) follow at residues 588-608 (FAIIPAAFAATYPQLNALNIM), 616-636 (AILSAVIFNALIIVFLIPLAL), and 656-676 (IYGLGGLLVPFIGIKVIDLLL).

Belongs to the cation transport ATPase (P-type) (TC 3.A.3) family. Type IA subfamily. As to quaternary structure, the system is composed of three essential subunits: KdpA, KdpB and KdpC.

Its subcellular location is the cell inner membrane. The enzyme catalyses K(+)(out) + ATP + H2O = K(+)(in) + ADP + phosphate + H(+). In terms of biological role, part of the high-affinity ATP-driven potassium transport (or Kdp) system, which catalyzes the hydrolysis of ATP coupled with the electrogenic transport of potassium into the cytoplasm. This subunit is responsible for energy coupling to the transport system and for the release of the potassium ions to the cytoplasm. This Escherichia fergusonii (strain ATCC 35469 / DSM 13698 / CCUG 18766 / IAM 14443 / JCM 21226 / LMG 7866 / NBRC 102419 / NCTC 12128 / CDC 0568-73) protein is Potassium-transporting ATPase ATP-binding subunit.